Consider the following 510-residue polypeptide: ATP synthase subunit alpha (510 aa).

G169–T176 contributes to the ATP binding site.

The protein belongs to the ATPase alpha/beta chains family. As to quaternary structure, F-type ATPases have 2 components, CF(1) - the catalytic core - and CF(0) - the membrane proton channel. CF(1) has five subunits: alpha(3), beta(3), gamma(1), delta(1), epsilon(1). CF(0) has three main subunits: a(1), b(2) and c(9-12). The alpha and beta chains form an alternating ring which encloses part of the gamma chain. CF(1) is attached to CF(0) by a central stalk formed by the gamma and epsilon chains, while a peripheral stalk is formed by the delta and b chains.

Its subcellular location is the cell membrane. The catalysed reaction is ATP + H2O + 4 H(+)(in) = ADP + phosphate + 5 H(+)(out). Functionally, produces ATP from ADP in the presence of a proton gradient across the membrane. The alpha chain is a regulatory subunit. The polypeptide is ATP synthase subunit alpha (Thermomicrobium roseum (strain ATCC 27502 / DSM 5159 / P-2)).